We begin with the raw amino-acid sequence, 263 residues long: Bidirectional sugar transporter SWEET3 (263 aa).

At 1 to 7 the chain is on the extracellular side; that stretch reads MGDKLRL. Residues 8 to 28 traverse the membrane as a helical segment; the sequence is SIGILGNGASLLLYTAPIVTF. Residues 9 to 97 enclose the MtN3/slv 1 domain; the sequence is IGILGNGASL…FIYFYYASPK (89 aa). The Cytoplasmic segment spans residues 29-42; that stretch reads SRVFKKKSTEEFSC. Residues 43–63 traverse the membrane as a helical segment; that stretch reads FPYVMTLFNCLIYTWYGLPIV. The Extracellular portion of the chain corresponds to 64 to 71; it reads SHLWENLP. The helical transmembrane segment at 72 to 92 threads the bilayer; it reads LVTINGVGILLESIFIFIYFY. The Cytoplasmic portion of the chain corresponds to 93 to 103; that stretch reads YASPKEKIKVG. A helical membrane pass occupies residues 104–124; the sequence is VTFVPVIVGFGLTTAISALVF. Topologically, residues 125 to 132 are extracellular; that stretch reads DDHRHRKS. Residues 133 to 153 form a helical membrane-spanning segment; that stretch reads FVGSVGLVASISMYGSPLVVM. One can recognise a MtN3/slv 2 domain in the interval 133-217; it reads FVGSVGLVAS…ILYFKYKNKK (85 aa). Residues 154–165 are Cytoplasmic-facing; sequence KKVIETRSVEYM. Residues 166–186 traverse the membrane as a helical segment; that stretch reads PFYLSFFSFLASSLWLAYGLL. The Extracellular portion of the chain corresponds to 187-190; sequence SHDL. A helical transmembrane segment spans residues 191–211; that stretch reads FLASPNMVATPLGILQLILYF. Residues 212–263 are Cytoplasmic-facing; sequence KYKNKKDLAPTTMVITKRNDHDDKNKATLEFVVDVDRNSDTNEKNSNNASSI.

The protein belongs to the SWEET sugar transporter family. As to quaternary structure, forms heterooligomers with SWEET11, SWEET13 and SWEET17.

The protein localises to the cell membrane. Functionally, mediates both low-affinity uptake and efflux of sugar across the plasma membrane. The polypeptide is Bidirectional sugar transporter SWEET3 (Arabidopsis thaliana (Mouse-ear cress)).